A 398-amino-acid polypeptide reads, in one-letter code: MKAITLVGSTGSIGTQTLDIVTQYPDQFRIVGLAAGNNVEMLAAQIRQFRPKIAAICSEDKLPALKEAIIDLDPQPILLAGEAGVIEVARYGDAQTVVTGIVGCAGLLPTIAAIEAGKDIALANKETLIAGAPVVLPLVEKHGVKLLPADSEHSAIFQCLQGVPKSGLRKILLTASGGAFRDWDVERLADVTVADALKHPNWSMGRKITVDSATLMNKGLEVIEAHFLFGLDYDNIEIVIHPQSIIHSLIELQDTSVLAQLGWPDMRLPLLYALSWPDRIYTDWERLDLVKAGNLTFREPDHQKYPCMQLAYAVGKAGGSMPAVLNAANEQAVALFLDEKIRFLDIPRCIEWVCDRHQNDNRANPSLDDILAADKWARQEVLTATEKLETPSRIISLR.

NADPH contacts are provided by Thr-10, Gly-11, Ser-12, Ile-13, Gly-36, Asn-38, and Asn-124. Lys-125 contributes to the 1-deoxy-D-xylulose 5-phosphate binding site. Position 126 (Glu-126) interacts with NADPH. Asp-150 lines the Mn(2+) pocket. 1-deoxy-D-xylulose 5-phosphate contacts are provided by Ser-151, Glu-152, Ser-176, and His-199. Position 152 (Glu-152) interacts with Mn(2+). An NADPH-binding site is contributed by Gly-205. 1-deoxy-D-xylulose 5-phosphate contacts are provided by Ser-212, Asn-217, Lys-218, and Glu-221. Glu-221 lines the Mn(2+) pocket.

This sequence belongs to the DXR family. Mg(2+) serves as cofactor. Requires Mn(2+) as cofactor.

It carries out the reaction 2-C-methyl-D-erythritol 4-phosphate + NADP(+) = 1-deoxy-D-xylulose 5-phosphate + NADPH + H(+). The protein operates within isoprenoid biosynthesis; isopentenyl diphosphate biosynthesis via DXP pathway; isopentenyl diphosphate from 1-deoxy-D-xylulose 5-phosphate: step 1/6. In terms of biological role, catalyzes the NADPH-dependent rearrangement and reduction of 1-deoxy-D-xylulose-5-phosphate (DXP) to 2-C-methyl-D-erythritol 4-phosphate (MEP). The protein is 1-deoxy-D-xylulose 5-phosphate reductoisomerase of Nostoc punctiforme (strain ATCC 29133 / PCC 73102).